Here is a 415-residue protein sequence, read N- to C-terminus: Serine--tRNA ligase (415 aa).

231 to 233 (TAE) is a binding site for L-serine. Position 262 to 264 (262 to 264 (RSE)) interacts with ATP. Glu-285 provides a ligand contact to L-serine. 349-352 (EISS) is an ATP binding site. Position 383 (Ser-383) interacts with L-serine.

Belongs to the class-II aminoacyl-tRNA synthetase family. Type-1 seryl-tRNA synthetase subfamily. Homodimer. The tRNA molecule binds across the dimer.

It is found in the cytoplasm. It catalyses the reaction tRNA(Ser) + L-serine + ATP = L-seryl-tRNA(Ser) + AMP + diphosphate + H(+). The enzyme catalyses tRNA(Sec) + L-serine + ATP = L-seryl-tRNA(Sec) + AMP + diphosphate + H(+). Its pathway is aminoacyl-tRNA biosynthesis; selenocysteinyl-tRNA(Sec) biosynthesis; L-seryl-tRNA(Sec) from L-serine and tRNA(Sec): step 1/1. Catalyzes the attachment of serine to tRNA(Ser). Is also able to aminoacylate tRNA(Sec) with serine, to form the misacylated tRNA L-seryl-tRNA(Sec), which will be further converted into selenocysteinyl-tRNA(Sec). This is Serine--tRNA ligase from Helicobacter pylori (strain J99 / ATCC 700824) (Campylobacter pylori J99).